We begin with the raw amino-acid sequence, 626 residues long: (+)-3-carene synthase 1, chloroplastic (626 aa).

Residues 1-45 constitute a chloroplast transit peptide; the sequence is MSLISAVPLASSCVSKSLISSVREHTALRRAIATLQMSRRGKSVA. 3 residues coordinate Mg(2+): Asp-377, Asp-381, and Asp-529. The DDXXD motif signature appears at 377 to 381; sequence DDMYD.

This sequence belongs to the terpene synthase family. Tpsd subfamily. It depends on Mg(2+) as a cofactor. The cofactor is Mn(2+).

It localises to the plastid. Its subcellular location is the chloroplast. The catalysed reaction is (2E)-geranyl diphosphate = (+)-car-3-ene + diphosphate. It carries out the reaction (2E)-geranyl diphosphate = terpinolene + diphosphate. The protein operates within terpene metabolism; oleoresin biosynthesis. It functions in the pathway secondary metabolite biosynthesis; terpenoid biosynthesis. Its function is as follows. Monoterpene synthase (TPS) involved in the biosynthesis of monoterpene natural products included in conifer oleoresin secretions and volatile emissions; these compounds contribute to biotic and abiotic stress defense against herbivores and pathogens. Catalyzes the conversion of (2E)-geranyl diphosphate (GPP) to (+)-car-3-ene and, to a lower extent, to terpinolene. This is (+)-3-carene synthase 1, chloroplastic from Pinus contorta (Shore pine).